A 376-amino-acid polypeptide reads, in one-letter code: Queuine tRNA-ribosyltransferase (376 aa).

Catalysis depends on aspartate 89, which acts as the Proton acceptor. Substrate contacts are provided by residues 89 to 93, aspartate 143, glutamine 194, and glycine 221; that span reads DSGGF. The interval 252 to 258 is RNA binding; that stretch reads GVGLPSN. The active-site Nucleophile is aspartate 271. Residues 276–280 form an RNA binding; important for wobble base 34 recognition region; that stretch reads ARNGR. 4 residues coordinate Zn(2+): cysteine 309, cysteine 311, cysteine 314, and histidine 340.

Belongs to the queuine tRNA-ribosyltransferase family. Homodimer. Within each dimer, one monomer is responsible for RNA recognition and catalysis, while the other monomer binds to the replacement base PreQ1. Requires Zn(2+) as cofactor.

The enzyme catalyses 7-aminomethyl-7-carbaguanine + guanosine(34) in tRNA = 7-aminomethyl-7-carbaguanosine(34) in tRNA + guanine. It participates in tRNA modification; tRNA-queuosine biosynthesis. Functionally, catalyzes the base-exchange of a guanine (G) residue with the queuine precursor 7-aminomethyl-7-deazaguanine (PreQ1) at position 34 (anticodon wobble position) in tRNAs with GU(N) anticodons (tRNA-Asp, -Asn, -His and -Tyr). Catalysis occurs through a double-displacement mechanism. The nucleophile active site attacks the C1' of nucleotide 34 to detach the guanine base from the RNA, forming a covalent enzyme-RNA intermediate. The proton acceptor active site deprotonates the incoming PreQ1, allowing a nucleophilic attack on the C1' of the ribose to form the product. After dissociation, two additional enzymatic reactions on the tRNA convert PreQ1 to queuine (Q), resulting in the hypermodified nucleoside queuosine (7-(((4,5-cis-dihydroxy-2-cyclopenten-1-yl)amino)methyl)-7-deazaguanosine). This Clostridium tetani (strain Massachusetts / E88) protein is Queuine tRNA-ribosyltransferase.